The chain runs to 270 residues: Phospholysine phosphohistidine inorganic pyrophosphate phosphatase (270 aa).

2 residues coordinate Mg(2+): D19 and C21. Residues 19–21, 56–57, and K191 each bind substrate; these read DMC and TN. A Mg(2+)-binding site is contributed by D216.

The protein belongs to the HAD-like hydrolase superfamily. Requires Mg(2+) as cofactor.

The protein localises to the cytoplasm. It localises to the nucleus. It carries out the reaction diphosphate + H2O = 2 phosphate + H(+). Phosphatase that hydrolyzes imidodiphosphate, 3-phosphohistidine and 6-phospholysine. Has broad substrate specificity and can also hydrolyze inorganic diphosphate, but with lower efficiency. This is Phospholysine phosphohistidine inorganic pyrophosphate phosphatase (lhpp) from Danio rerio (Zebrafish).